Consider the following 589-residue polypeptide: V-type ATP synthase alpha chain 1 (589 aa).

Position 239–246 (239–246) interacts with ATP; sequence GPFGAGKT.

The protein belongs to the ATPase alpha/beta chains family.

It carries out the reaction ATP + H2O + 4 H(+)(in) = ADP + phosphate + 5 H(+)(out). Functionally, produces ATP from ADP in the presence of a proton gradient across the membrane. The V-type alpha chain is a catalytic subunit. This chain is V-type ATP synthase alpha chain 1 (atpA1), found in Treponema pallidum (strain Nichols).